A 190-amino-acid chain; its full sequence is Somatotropin (190 aa).

His19 provides a ligand contact to Zn(2+). Cys52 and Cys163 are disulfide-bonded. Residue Glu172 participates in Zn(2+) binding. Cys180 and Cys188 are joined by a disulfide.

The protein belongs to the somatotropin/prolactin family.

The protein localises to the secreted. Its function is as follows. Growth hormone plays an important role in growth control and involved in the regulation of several anabolic processes. The sequence is that of Somatotropin (GH) from Crocodylus novaeguineae (Crocodile).